Reading from the N-terminus, the 339-residue chain is Peroxidase 29 (339 aa).

An N-terminal signal peptide occupies residues 1-28 (MKPKSKVAESTAASCFLVMSLLCSCIIG). Cystine bridges form between Cys-47-Cys-127, Cys-80-Cys-85, Cys-133-Cys-335, and Cys-213-Cys-242. The active-site Proton acceptor is His-78. The Ca(2+) site is built by Asp-79, Val-82, Gly-84, Asp-86, and Ser-88. Pro-176 provides a ligand contact to substrate. His-206 lines the heme b pocket. Thr-207 contributes to the Ca(2+) binding site. Asn-224 is a glycosylation site (N-linked (GlcNAc...) asparagine). Ca(2+) is bound by residues Asp-260, Thr-262, and Asp-267.

It belongs to the peroxidase family. Classical plant (class III) peroxidase subfamily. Heme b is required as a cofactor. It depends on Ca(2+) as a cofactor.

Its subcellular location is the secreted. The enzyme catalyses 2 a phenolic donor + H2O2 = 2 a phenolic radical donor + 2 H2O. Its function is as follows. Removal of H(2)O(2), oxidation of toxic reductants, biosynthesis and degradation of lignin, suberization, auxin catabolism, response to environmental stresses such as wounding, pathogen attack and oxidative stress. These functions might be dependent on each isozyme/isoform in each plant tissue. This chain is Peroxidase 29 (PER29), found in Arabidopsis thaliana (Mouse-ear cress).